Reading from the N-terminus, the 222-residue chain is Putative O-methyltransferase MAV_1364 (222 aa).

S-adenosyl-L-methionine contacts are provided by residues V49, E71, 73-74, S79, D97, and I98; that span reads GT. D145 contributes to the substrate binding site. D147 lines the S-adenosyl-L-methionine pocket.

This sequence belongs to the class I-like SAM-binding methyltransferase superfamily. Cation-dependent O-methyltransferase family.

This Mycobacterium avium (strain 104) protein is Putative O-methyltransferase MAV_1364.